Consider the following 363-residue polypeptide: Phosphoserine aminotransferase (363 aa).

Residue Arg42 participates in L-glutamate binding. Residues 76-77 (GR), Trp102, Thr156, Asp175, and Gln198 each bind pyridoxal 5'-phosphate. Lys199 carries the post-translational modification N6-(pyridoxal phosphate)lysine. A pyridoxal 5'-phosphate-binding site is contributed by 240-241 (NT).

It belongs to the class-V pyridoxal-phosphate-dependent aminotransferase family. SerC subfamily. As to quaternary structure, homodimer. Pyridoxal 5'-phosphate is required as a cofactor.

The protein resides in the cytoplasm. The enzyme catalyses O-phospho-L-serine + 2-oxoglutarate = 3-phosphooxypyruvate + L-glutamate. It catalyses the reaction 4-(phosphooxy)-L-threonine + 2-oxoglutarate = (R)-3-hydroxy-2-oxo-4-phosphooxybutanoate + L-glutamate. Its pathway is amino-acid biosynthesis; L-serine biosynthesis; L-serine from 3-phospho-D-glycerate: step 2/3. The protein operates within cofactor biosynthesis; pyridoxine 5'-phosphate biosynthesis; pyridoxine 5'-phosphate from D-erythrose 4-phosphate: step 3/5. Its function is as follows. Catalyzes the reversible conversion of 3-phosphohydroxypyruvate to phosphoserine and of 3-hydroxy-2-oxo-4-phosphonooxybutanoate to phosphohydroxythreonine. The sequence is that of Phosphoserine aminotransferase from Shewanella halifaxensis (strain HAW-EB4).